Here is an 863-residue protein sequence, read N- to C-terminus: Leucine--tRNA ligase (863 aa).

The 'HIGH' region signature appears at 42-52; that stretch reads PYPSGKIHMGH. The 'KMSKS' region signature appears at 618-622; the sequence is KMSKS. Lysine 621 serves as a coordination point for ATP.

Belongs to the class-I aminoacyl-tRNA synthetase family.

It localises to the cytoplasm. It carries out the reaction tRNA(Leu) + L-leucine + ATP = L-leucyl-tRNA(Leu) + AMP + diphosphate. In Desulfatibacillum aliphaticivorans, this protein is Leucine--tRNA ligase.